Here is a 123-residue protein sequence, read N- to C-terminus: MIQEQTMLNVADNSGARRVMCIKVLGGSHRRYAGVGDIIKITIKEAIPRGKVKKGDVLKAVVVRTKKGVRRPDGSVIRFDGNACVILNNNSEQPIGTRIFGPVTRELRNEKFMKIISLAPEVL.

Belongs to the universal ribosomal protein uL14 family. In terms of assembly, part of the 50S ribosomal subunit. Forms a cluster with proteins L3 and L19. In the 70S ribosome, L14 and L19 interact and together make contacts with the 16S rRNA in bridges B5 and B8.

In terms of biological role, binds to 23S rRNA. Forms part of two intersubunit bridges in the 70S ribosome. The polypeptide is Large ribosomal subunit protein uL14 (Pectobacterium atrosepticum (strain SCRI 1043 / ATCC BAA-672) (Erwinia carotovora subsp. atroseptica)).